The primary structure comprises 142 residues: Transcriptional regulator MraZ (142 aa).

2 consecutive SpoVT-AbrB domains span residues 5 to 51 (ASSL…PRPE) and 77 to 120 (AMDV…DKAS).

It belongs to the MraZ family. Forms oligomers.

Its subcellular location is the cytoplasm. It is found in the nucleoid. This Verminephrobacter eiseniae (strain EF01-2) protein is Transcriptional regulator MraZ.